The sequence spans 654 residues: Fructose-1,6-bisphosphatase class 3 (654 aa).

The tract at residues 288–307 is disordered; the sequence is NPAFKPKKRPDKHERLTQRE. A compositionally biased stretch (basic and acidic residues) spans 298-307; it reads DKHERLTQRE.

It belongs to the FBPase class 3 family. The cofactor is Mn(2+).

The catalysed reaction is beta-D-fructose 1,6-bisphosphate + H2O = beta-D-fructose 6-phosphate + phosphate. The protein operates within carbohydrate biosynthesis; gluconeogenesis. The sequence is that of Fructose-1,6-bisphosphatase class 3 from Staphylococcus aureus (strain MSSA476).